The chain runs to 132 residues: MAVPTSVSLVLASVTAVLIFSAMQMYKPLIASSQMATVFGGFLGSWLFILSLTAVSNLEAVVLGKGFQAKLFPEVAFCLIGSLFACGMVHRVCATTCILFSVAALYYINRISQKVHNAPVPVDTYAGKKKKK.

The next 4 membrane-spanning stretches (helical) occupy residues 1–21, 35–55, 69–89, and 92–109; these read MAVP…LIFS, MATV…LTAV, AKLF…CGMV, and VCAT…YYIN.

This sequence belongs to the KRTCAP2 family. As to quaternary structure, component of the oligosaccharyltransferase (OST) complex.

It is found in the membrane. In terms of biological role, subunit of the oligosaccharyl transferase (OST) complex that catalyzes the initial transfer of a defined glycan (Glc(3)Man(9)GlcNAc(2) in eukaryotes) from the lipid carrier dolichol-pyrophosphate to an asparagine residue within an Asn-X-Ser/Thr consensus motif in nascent polypeptide chains, the first step in protein N-glycosylation. N-glycosylation occurs cotranslationally and the complex associates with the Sec61 complex at the channel-forming translocon complex that mediates protein translocation across the endoplasmic reticulum (ER). All subunits are required for a maximal enzyme activity. The sequence is that of Protein KRTCAP2 homolog from Aedes aegypti (Yellowfever mosquito).